Here is a 172-residue protein sequence, read N- to C-terminus: Large ribosomal subunit protein uL10 (172 aa).

It belongs to the universal ribosomal protein uL10 family. In terms of assembly, part of the ribosomal stalk of the 50S ribosomal subunit. The N-terminus interacts with L11 and the large rRNA to form the base of the stalk. The C-terminus forms an elongated spine to which L12 dimers bind in a sequential fashion forming a multimeric L10(L12)X complex.

Its function is as follows. Forms part of the ribosomal stalk, playing a central role in the interaction of the ribosome with GTP-bound translation factors. The sequence is that of Large ribosomal subunit protein uL10 from Rhodopseudomonas palustris (strain HaA2).